The sequence spans 424 residues: DNA primase DnaG (424 aa).

A Toprim domain is found at 166–241; it reads DTIIIVEGRA…KVDFIARAPE (76 aa). 3 residues coordinate Mg(2+): Glu172, Asp215, and Asp217.

This sequence belongs to the archaeal DnaG primase family. Forms a ternary complex with MCM helicase and DNA. Component of the archaeal exosome complex. Requires Mg(2+) as cofactor.

It catalyses the reaction ssDNA + n NTP = ssDNA/pppN(pN)n-1 hybrid + (n-1) diphosphate.. Functionally, RNA polymerase that catalyzes the synthesis of short RNA molecules used as primers for DNA polymerase during DNA replication. Also part of the exosome, which is a complex involved in RNA degradation. Acts as a poly(A)-binding protein that enhances the interaction between heteromeric, adenine-rich transcripts and the exosome. In Staphylothermus marinus (strain ATCC 43588 / DSM 3639 / JCM 9404 / F1), this protein is DNA primase DnaG.